The following is a 291-amino-acid chain: Pantothenate synthetase (291 aa).

30 to 37 (MGYLHAGH) contacts ATP. The active-site Proton donor is the H37. Residue Q61 coordinates (R)-pantoate. Beta-alanine is bound at residue Q61. ATP is bound at residue 147-150 (GEKD). Q153 contacts (R)-pantoate. ATP contacts are provided by residues V176 and 184–187 (LSSR).

It belongs to the pantothenate synthetase family. As to quaternary structure, homodimer.

Its subcellular location is the cytoplasm. The catalysed reaction is (R)-pantoate + beta-alanine + ATP = (R)-pantothenate + AMP + diphosphate + H(+). The protein operates within cofactor biosynthesis; (R)-pantothenate biosynthesis; (R)-pantothenate from (R)-pantoate and beta-alanine: step 1/1. In terms of biological role, catalyzes the condensation of pantoate with beta-alanine in an ATP-dependent reaction via a pantoyl-adenylate intermediate. The protein is Pantothenate synthetase of Rhizobium rhizogenes (strain K84 / ATCC BAA-868) (Agrobacterium radiobacter).